A 249-amino-acid chain; its full sequence is Galactan endo-beta-1,3-galactanase (249 aa).

The signal sequence occupies residues Met-1–Ala-21. The GH16 domain occupies Ser-34–Thr-247. Residue Asn-48 is glycosylated (N-linked (GlcNAc...) asparagine). Glu-138 serves as the catalytic Nucleophile. Glu-143 functions as the Proton donor in the catalytic mechanism. An N-linked (GlcNAc...) asparagine glycan is attached at Asn-156.

It belongs to the glycosyl hydrolase 16 family. In terms of processing, N-glycosylated.

The catalysed reaction is The enzyme specifically hydrolyzes beta-1,3-galactan and beta-1,3-galactooligosaccharides.. Functionally, specifically hydrolyzes beta-1,3-galactan in an endo-fashion. Requires at least 3 contiguous beta-1,3-residues. This Flammulina velutipes (Agaricus velutipes) protein is Galactan endo-beta-1,3-galactanase (EN3GAL).